The primary structure comprises 468 residues: Peroxisome proliferator-activated receptor alpha (468 aa).

A DNA-binding region (nuclear receptor) is located at residues 99-173 (NIECRICGDK…VGMSHNAIRF (75 aa)). 2 NR C4-type zinc fingers span residues 102 to 122 (CRIC…CEGC) and 139 to 161 (CDRS…FHKC). An NR LBD domain is found at 239–466 (FVIHDMETLC…HPLLQEIYRD (228 aa)). The segment at 304 to 433 (DQVTLLKYGV…PKLLQKMVDL (130 aa)) is required for heterodimerization with RXRA.

Belongs to the nuclear hormone receptor family. NR1 subfamily. As to quaternary structure, heterodimer; with RXRA. This heterodimerization is required for DNA binding and transactivation activity. Interacts with NCOA3 coactivator. Interacts with CITED2; the interaction stimulates its transcriptional activity. Also interacts with PPARBP in vitro. Interacts with AKAP13, LPIN1, PRDM16 and coactivator NCOA6. Interacts with ASXL1 and ASXL2. Interacts with PER2. Interacts with SIRT1; the interaction seems to be modulated by NAD(+) levels. Interacts with CRY1 and CRY2. In hepatocytes, interacts with PAQR3 and HUWE1; the interactions promote PPARA poylubiquitination and HUWE1-mediated degradation. Ubiquitinated by E3 ubiquitin-protein ligase HUWE1; leading to proteasomal degradation. Post-translationally, phosphorylated. Highly expressed in liver, kidney and heart. Very weakly expressed in brain and testis.

It is found in the nucleus. Its function is as follows. Ligand-activated transcription factor. Key regulator of lipid metabolism. Activated by the endogenous ligand 1-palmitoyl-2-oleoyl-sn-glycerol-3-phosphocholine (16:0/18:1-GPC). Activated by oleylethanolamide, a naturally occurring lipid that regulates satiety. Receptor for peroxisome proliferators such as hypolipidemic drugs and fatty acids. Regulates the peroxisomal beta-oxidation pathway of fatty acids. Functions as a transcription activator for the ACOX1 and P450 genes. Transactivation activity requires heterodimerization with RXRA and is antagonized by NR2C2. May be required for the propagation of clock information to metabolic pathways regulated by PER2. In Mus musculus (Mouse), this protein is Peroxisome proliferator-activated receptor alpha (Ppara).